Reading from the N-terminus, the 89-residue chain is HssA/B-like protein 22 (89 aa).

The protein belongs to the hssA/B family.

In Dictyostelium discoideum (Social amoeba), this protein is HssA/B-like protein 22 (hssl22).